Reading from the N-terminus, the 316-residue chain is Aspartate carbamoyltransferase catalytic subunit (316 aa).

Residues arginine 56 and threonine 57 each coordinate carbamoyl phosphate. L-aspartate is bound at residue lysine 84. Residues arginine 106, histidine 139, and glutamine 142 each coordinate carbamoyl phosphate. Residues arginine 172 and arginine 224 each coordinate L-aspartate. Carbamoyl phosphate-binding residues include glycine 268 and proline 269.

It belongs to the aspartate/ornithine carbamoyltransferase superfamily. ATCase family. In terms of assembly, heterododecamer (2C3:3R2) of six catalytic PyrB chains organized as two trimers (C3), and six regulatory PyrI chains organized as three dimers (R2).

The enzyme catalyses carbamoyl phosphate + L-aspartate = N-carbamoyl-L-aspartate + phosphate + H(+). Its pathway is pyrimidine metabolism; UMP biosynthesis via de novo pathway; (S)-dihydroorotate from bicarbonate: step 2/3. In terms of biological role, catalyzes the condensation of carbamoyl phosphate and aspartate to form carbamoyl aspartate and inorganic phosphate, the committed step in the de novo pyrimidine nucleotide biosynthesis pathway. The protein is Aspartate carbamoyltransferase catalytic subunit of Ligilactobacillus salivarius (strain UCC118) (Lactobacillus salivarius).